A 509-amino-acid chain; its full sequence is Maturase K (509 aa).

This sequence belongs to the intron maturase 2 family. MatK subfamily.

The protein localises to the plastid. It is found in the chloroplast. Functionally, usually encoded in the trnK tRNA gene intron. Probably assists in splicing its own and other chloroplast group II introns. The polypeptide is Maturase K (Solanum lycopersicum (Tomato)).